Here is a 142-residue protein sequence, read N- to C-terminus: Large ribosomal subunit protein uL11 (142 aa).

This sequence belongs to the universal ribosomal protein uL11 family. As to quaternary structure, part of the ribosomal stalk of the 50S ribosomal subunit. Interacts with L10 and the large rRNA to form the base of the stalk. L10 forms an elongated spine to which L12 dimers bind in a sequential fashion forming a multimeric L10(L12)X complex. One or more lysine residues are methylated.

In terms of biological role, forms part of the ribosomal stalk which helps the ribosome interact with GTP-bound translation factors. This Leptospira borgpetersenii serovar Hardjo-bovis (strain JB197) protein is Large ribosomal subunit protein uL11.